Consider the following 199-residue polypeptide: Nucleoside triphosphate pyrophosphatase (199 aa).

The Proton acceptor role is filled by D72.

The protein belongs to the Maf family. It depends on a divalent metal cation as a cofactor.

Its subcellular location is the cytoplasm. It catalyses the reaction a ribonucleoside 5'-triphosphate + H2O = a ribonucleoside 5'-phosphate + diphosphate + H(+). It carries out the reaction a 2'-deoxyribonucleoside 5'-triphosphate + H2O = a 2'-deoxyribonucleoside 5'-phosphate + diphosphate + H(+). Nucleoside triphosphate pyrophosphatase. May have a dual role in cell division arrest and in preventing the incorporation of modified nucleotides into cellular nucleic acids. The protein is Nucleoside triphosphate pyrophosphatase of Synechococcus elongatus (strain ATCC 33912 / PCC 7942 / FACHB-805) (Anacystis nidulans R2).